An 87-amino-acid polypeptide reads, in one-letter code: MANTPQAKKRIRRNQARAVVNKNRVSRIRTLVKKVEAAVAAGDKDAAATALKAAQPEMARGVAKGVLHKNTVARKYSRLTKSVNAIA.

This sequence belongs to the bacterial ribosomal protein bS20 family.

Functionally, binds directly to 16S ribosomal RNA. This Sphingopyxis alaskensis (strain DSM 13593 / LMG 18877 / RB2256) (Sphingomonas alaskensis) protein is Small ribosomal subunit protein bS20.